We begin with the raw amino-acid sequence, 435 residues long: Ribosomal protein uS12 methylthiotransferase RimO (435 aa).

The 111-residue stretch at 3 to 113 (HKVGFVSLGC…VVNAVHQHLP (111 aa)) folds into the MTTase N-terminal domain. Residues Cys-12, Cys-48, Cys-77, Cys-144, Cys-148, and Cys-151 each contribute to the [4Fe-4S] cluster site. The region spanning 130–367 (LTPRHYAYLK…MQVQAEISRN (238 aa)) is the Radical SAM core domain. A TRAM domain is found at 370-435 (KNKIGSTQTV…DDYDLYASLV (66 aa)).

The protein belongs to the methylthiotransferase family. RimO subfamily. [4Fe-4S] cluster serves as cofactor.

Its subcellular location is the cytoplasm. The catalysed reaction is L-aspartate(89)-[ribosomal protein uS12]-hydrogen + (sulfur carrier)-SH + AH2 + 2 S-adenosyl-L-methionine = 3-methylsulfanyl-L-aspartate(89)-[ribosomal protein uS12]-hydrogen + (sulfur carrier)-H + 5'-deoxyadenosine + L-methionine + A + S-adenosyl-L-homocysteine + 2 H(+). In terms of biological role, catalyzes the methylthiolation of an aspartic acid residue of ribosomal protein uS12. This Legionella pneumophila (strain Lens) protein is Ribosomal protein uS12 methylthiotransferase RimO.